The chain runs to 218 residues: Ribosomal RNA large subunit methyltransferase E (218 aa).

S-adenosyl-L-methionine is bound by residues Gly64, Trp66, Asp92, Asp108, and Asp133. Lys173 (proton acceptor) is an active-site residue.

It belongs to the class I-like SAM-binding methyltransferase superfamily. RNA methyltransferase RlmE family.

The protein localises to the cytoplasm. The catalysed reaction is uridine(2552) in 23S rRNA + S-adenosyl-L-methionine = 2'-O-methyluridine(2552) in 23S rRNA + S-adenosyl-L-homocysteine + H(+). In terms of biological role, specifically methylates the uridine in position 2552 of 23S rRNA at the 2'-O position of the ribose in the fully assembled 50S ribosomal subunit. In Paracidovorax citrulli (strain AAC00-1) (Acidovorax citrulli), this protein is Ribosomal RNA large subunit methyltransferase E.